The sequence spans 380 residues: Acetylornithine deacetylase (380 aa).

His-79 provides a ligand contact to Zn(2+). The active site involves Asp-81. Asp-109 lines the Zn(2+) pocket. Glu-139 is an active-site residue. Residues Glu-140, Glu-164, and His-351 each coordinate Zn(2+).

The protein belongs to the peptidase M20A family. ArgE subfamily. In terms of assembly, homodimer. The cofactor is Zn(2+). Co(2+) serves as cofactor. Requires glutathione as cofactor.

It localises to the cytoplasm. It carries out the reaction N(2)-acetyl-L-ornithine + H2O = L-ornithine + acetate. The protein operates within amino-acid biosynthesis; L-arginine biosynthesis; L-ornithine from N(2)-acetyl-L-ornithine (linear): step 1/1. Functionally, catalyzes the hydrolysis of the amide bond of N(2)-acetylated L-amino acids. Cleaves the acetyl group from N-acetyl-L-ornithine to form L-ornithine, an intermediate in L-arginine biosynthesis pathway, and a branchpoint in the synthesis of polyamines. In Myxococcus xanthus, this protein is Acetylornithine deacetylase.